A 606-amino-acid chain; its full sequence is DNA ligase (606 aa).

An ATP-binding site is contributed by Glu-263. Lys-265 functions as the N6-AMP-lysine intermediate in the catalytic mechanism. ATP-binding residues include Arg-270, Arg-285, Glu-315, Phe-355, Arg-432, and Lys-438.

The protein belongs to the ATP-dependent DNA ligase family. Mg(2+) serves as cofactor. Requires Mn(2+) as cofactor.

It carries out the reaction ATP + (deoxyribonucleotide)n-3'-hydroxyl + 5'-phospho-(deoxyribonucleotide)m = (deoxyribonucleotide)n+m + AMP + diphosphate.. The enzyme catalyses ADP + (deoxyribonucleotide)n-3'-hydroxyl + 5'-phospho-(deoxyribonucleotide)m = (deoxyribonucleotide)n+m + AMP + phosphate.. The catalysed reaction is GTP + (deoxyribonucleotide)n-3'-hydroxyl + 5'-phospho-(deoxyribonucleotide)m = (deoxyribonucleotide)n+m + GMP + diphosphate.. In terms of biological role, DNA ligase that seals nicks in double-stranded DNA during DNA replication, DNA recombination and DNA repair. Can use ATP, ADP and GTP, but not CTP, TTP or NAD(+). The protein is DNA ligase of Sulfophobococcus zilligii.